Consider the following 259-residue polypeptide: Deoxyribose-phosphate aldolase (259 aa).

The active-site Proton donor/acceptor is aspartate 102. Lysine 167 acts as the Schiff-base intermediate with acetaldehyde in catalysis. Residue lysine 201 is the Proton donor/acceptor of the active site.

It belongs to the DeoC/FbaB aldolase family. DeoC type 2 subfamily.

The protein localises to the cytoplasm. It catalyses the reaction 2-deoxy-D-ribose 5-phosphate = D-glyceraldehyde 3-phosphate + acetaldehyde. The protein operates within carbohydrate degradation; 2-deoxy-D-ribose 1-phosphate degradation; D-glyceraldehyde 3-phosphate and acetaldehyde from 2-deoxy-alpha-D-ribose 1-phosphate: step 2/2. In terms of biological role, catalyzes a reversible aldol reaction between acetaldehyde and D-glyceraldehyde 3-phosphate to generate 2-deoxy-D-ribose 5-phosphate. The chain is Deoxyribose-phosphate aldolase from Erwinia tasmaniensis (strain DSM 17950 / CFBP 7177 / CIP 109463 / NCPPB 4357 / Et1/99).